Here is a 353-residue protein sequence, read N- to C-terminus: Photosystem II protein D1 (353 aa).

N-acetylthreonine is present on T2. T2 is modified (phosphothreonine). A run of 3 helical transmembrane segments spans residues 29-46 (YIGW…TATS), 118-133 (HFLL…EWEL), and 142-156 (WIAV…AATA). H118 is a chlorophyll a binding site. Y126 is a binding site for pheophytin a. Residues D170 and E189 each coordinate [CaMn4O5] cluster. Residues 197–218 (FHMLGVAGVFGGSLFSAMHGSL) form a helical membrane-spanning segment. A chlorophyll a-binding site is contributed by H198. A quinone is bound by residues H215 and 264–265 (SF). H215 contacts Fe cation. Fe cation is bound at residue H272. A helical membrane pass occupies residues 274 to 288 (FLAAWPVVGIWFTAL). [CaMn4O5] cluster contacts are provided by H332, E333, D342, and A344. Residues 345–353 (SVEAPSINA) constitute a propeptide that is removed on maturation.

This sequence belongs to the reaction center PufL/M/PsbA/D family. In terms of assembly, PSII is composed of 1 copy each of membrane proteins PsbA, PsbB, PsbC, PsbD, PsbE, PsbF, PsbH, PsbI, PsbJ, PsbK, PsbL, PsbM, PsbT, PsbX, PsbY, PsbZ, Psb30/Ycf12, at least 3 peripheral proteins of the oxygen-evolving complex and a large number of cofactors. It forms dimeric complexes. The cofactor is The D1/D2 heterodimer binds P680, chlorophylls that are the primary electron donor of PSII, and subsequent electron acceptors. It shares a non-heme iron and each subunit binds pheophytin, quinone, additional chlorophylls, carotenoids and lipids. D1 provides most of the ligands for the Mn4-Ca-O5 cluster of the oxygen-evolving complex (OEC). There is also a Cl(-1) ion associated with D1 and D2, which is required for oxygen evolution. The PSII complex binds additional chlorophylls, carotenoids and specific lipids.. In terms of processing, tyr-161 forms a radical intermediate that is referred to as redox-active TyrZ, YZ or Y-Z. Post-translationally, C-terminally processed by CTPA; processing is essential to allow assembly of the oxygen-evolving complex and thus photosynthetic growth.

The protein localises to the plastid. It is found in the chloroplast thylakoid membrane. It catalyses the reaction 2 a plastoquinone + 4 hnu + 2 H2O = 2 a plastoquinol + O2. Functionally, photosystem II (PSII) is a light-driven water:plastoquinone oxidoreductase that uses light energy to abstract electrons from H(2)O, generating O(2) and a proton gradient subsequently used for ATP formation. It consists of a core antenna complex that captures photons, and an electron transfer chain that converts photonic excitation into a charge separation. The D1/D2 (PsbA/PsbD) reaction center heterodimer binds P680, the primary electron donor of PSII as well as several subsequent electron acceptors. This Chara vulgaris (Common stonewort) protein is Photosystem II protein D1.